The following is a 322-amino-acid chain: Eukaryotic translation initiation factor 3 subunit I (322 aa).

WD repeat units lie at residues 4-43 (GHER…RLGT), 46-85 (GHQG…IIAS), 141-180 (MTES…KVVD), 184-223 (DHTA…CLKT), and 281-322 (GHFG…NIFE).

The protein belongs to the eIF-3 subunit I family. As to quaternary structure, component of the eukaryotic translation initiation factor 3 (eIF-3) complex. The eIF-3 complex interacts with pix.

It localises to the cytoplasm. Its function is as follows. Component of the eukaryotic translation initiation factor 3 (eIF-3) complex, which is involved in protein synthesis of a specialized repertoire of mRNAs and, together with other initiation factors, stimulates binding of mRNA and methionyl-tRNAi to the 40S ribosome. The eIF-3 complex specifically targets and initiates translation of a subset of mRNAs involved in cell proliferation. In Drosophila ananassae (Fruit fly), this protein is Eukaryotic translation initiation factor 3 subunit I.